A 402-amino-acid polypeptide reads, in one-letter code: Uroporphyrinogen decarboxylase 1, chloroplastic (402 aa).

Residues 1–50 constitute a chloroplast transit peptide; sequence MISATATAAFLAAAPASSSSCTTHRRRSGLPAISASLATASSTEEPLLVR. Residues 67–71, Phe86, Ser116, Asp117, Tyr193, Ser248, and His363 each bind substrate; that span reads RQAGR.

It belongs to the uroporphyrinogen decarboxylase family. Homodimer.

The protein resides in the plastid. It is found in the chloroplast. It catalyses the reaction uroporphyrinogen III + 4 H(+) = coproporphyrinogen III + 4 CO2. The protein operates within porphyrin-containing compound metabolism; protoporphyrin-IX biosynthesis; coproporphyrinogen-III from 5-aminolevulinate: step 4/4. Functionally, catalyzes the decarboxylation of four acetate groups of uroporphyrinogen-III to yield coproporphyrinogen-III. The polypeptide is Uroporphyrinogen decarboxylase 1, chloroplastic (Oryza sativa subsp. japonica (Rice)).